A 621-amino-acid polypeptide reads, in one-letter code: 1-deoxy-D-xylulose-5-phosphate synthase (621 aa).

Residues His-80 and 121 to 123 (GHS) each bind thiamine diphosphate. Mg(2+) is bound at residue Asp-152. Residues 153 to 154 (GA), Asn-181, Tyr-288, and Glu-370 contribute to the thiamine diphosphate site. Position 181 (Asn-181) interacts with Mg(2+).

This sequence belongs to the transketolase family. DXPS subfamily. Homodimer. Mg(2+) is required as a cofactor. It depends on thiamine diphosphate as a cofactor.

The enzyme catalyses D-glyceraldehyde 3-phosphate + pyruvate + H(+) = 1-deoxy-D-xylulose 5-phosphate + CO2. Its pathway is metabolic intermediate biosynthesis; 1-deoxy-D-xylulose 5-phosphate biosynthesis; 1-deoxy-D-xylulose 5-phosphate from D-glyceraldehyde 3-phosphate and pyruvate: step 1/1. In terms of biological role, catalyzes the acyloin condensation reaction between C atoms 2 and 3 of pyruvate and glyceraldehyde 3-phosphate to yield 1-deoxy-D-xylulose-5-phosphate (DXP). The chain is 1-deoxy-D-xylulose-5-phosphate synthase from Shewanella sediminis (strain HAW-EB3).